The primary structure comprises 358 residues: Cyanide hydratase (358 aa).

The region spanning 8-287 (YKAAAVNAEP…QGLLFVDIDL (280 aa)) is the CN hydrolase domain. Residue Glu48 is the Proton acceptor of the active site. Lys130 is an active-site residue. Cys165 acts as the Nucleophile in catalysis.

Belongs to the carbon-nitrogen hydrolase superfamily. Nitrilase family. Oligomer of dimers, forming left-handed helical fibers.

It catalyses the reaction formamide = hydrogen cyanide + H2O. In terms of biological role, catalyzes the hydration of cyanide to formamide. Degradation of cyanide may be important for plant pathogenic fungi in infection of cyanogenic plants. The sequence is that of Cyanide hydratase from Penicillium rubens (strain ATCC 28089 / DSM 1075 / NRRL 1951 / Wisconsin 54-1255) (Penicillium chrysogenum).